The following is an 86-amino-acid chain: Probable oxaloacetate decarboxylase gamma chain 1 (86 aa).

Residues A11–V33 form a helical membrane-spanning segment.

This sequence belongs to the OadG family. In terms of assembly, heterotrimer of an alpha, a beta and a gamma subunit. The cofactor is Na(+).

It is found in the cell membrane. It catalyses the reaction oxaloacetate + 2 Na(+)(in) + H(+) = pyruvate + 2 Na(+)(out) + CO2. Functionally, catalyzes the decarboxylation of oxaloacetate coupled to Na(+) translocation. The polypeptide is Probable oxaloacetate decarboxylase gamma chain 1 (oadG1) (Vibrio cholerae serotype O1 (strain ATCC 39315 / El Tor Inaba N16961)).